Reading from the N-terminus, the 238-residue chain is MRPNDRAADQVRPIKITRNYTAYAEGSVLVEFGNTKVLCNATVEESVPRWLKGQGKGWVTAEYGMLPRATHSRTRREAANGKQGGRTMEIQRLIARSLRAVVDLEAMGEFMITVDCDVIQADGGTRTASISGASVAMADAFQHLVDSGKLKANPMKGHVAAVSVGILGEDVLCDLEYVEDSAADTDMNVVMTEEGKMIEIQGTAEGEPFSHEQLLALLESAKKGISEIVAAQKAALAN.

Phosphate-binding positions include R86 and 124 to 126 (GTR).

This sequence belongs to the RNase PH family. Homohexameric ring arranged as a trimer of dimers.

The catalysed reaction is tRNA(n+1) + phosphate = tRNA(n) + a ribonucleoside 5'-diphosphate. Phosphorolytic 3'-5' exoribonuclease that plays an important role in tRNA 3'-end maturation. Removes nucleotide residues following the 3'-CCA terminus of tRNAs; can also add nucleotides to the ends of RNA molecules by using nucleoside diphosphates as substrates, but this may not be physiologically important. Probably plays a role in initiation of 16S rRNA degradation (leading to ribosome degradation) during starvation. The polypeptide is Ribonuclease PH (Vibrio vulnificus (strain CMCP6)).